Consider the following 300-residue polypeptide: Cation-efflux pump FieF (300 aa).

Residues 24-44 (LLIKIFAWWYTGSVSILAALV) traverse the membrane as a helical segment. Residues D45 and D49 each coordinate Zn(2+). Transmembrane regions (helical) follow at residues 82–102 (AALA…LTSI) and 114–134 (PGVG…LVTF). 2 residues coordinate Zn(2+): H153 and D157. Helical transmembrane passes span 156–176 (SDVM…YGWH) and 178–198 (ADAL…LRMG).

The protein belongs to the cation diffusion facilitator (CDF) transporter (TC 2.A.4) family. FieF subfamily. In terms of assembly, homodimer.

It localises to the cell inner membrane. It carries out the reaction Zn(2+)(in) + H(+)(out) = Zn(2+)(out) + H(+)(in). The catalysed reaction is Cd(2+)(in) + H(+)(out) = Cd(2+)(out) + H(+)(in). The enzyme catalyses Fe(2+)(in) + H(+)(out) = Fe(2+)(out) + H(+)(in). Functionally, divalent metal cation transporter which exports Zn(2+), Cd(2+) and possibly Fe(2+). May be involved in zinc and iron detoxification by efflux. The sequence is that of Cation-efflux pump FieF from Salmonella enteritidis PT4 (strain P125109).